The chain runs to 1058 residues: Carbamoyl phosphate synthase large chain (1058 aa).

Positions 1-401 (MSKRKDIQKI…SLLKACRSLE (401 aa)) are carboxyphosphate synthetic domain. Positions 129, 169, 175, 176, 208, 210, 215, 241, 242, 243, 284, and 298 each coordinate ATP. One can recognise an ATP-grasp 1 domain in the interval 133–327 (KQLMQELDQP…IAKLAAKIAV (195 aa)). Residues Gln-284, Glu-298, and Asn-300 each contribute to the Mg(2+) site. Mn(2+) contacts are provided by Gln-284, Glu-298, and Asn-300. Residues 402 to 546 (IGVCHNEMTS…YSTYELENES (145 aa)) form an oligomerization domain region. The carbamoyl phosphate synthetic domain stretch occupies residues 547-929 (VQSNKESILV…ALYKAFEANN (383 aa)). The 191-residue stretch at 671 to 861 (EKALKELGIP…MAQIATKLIL (191 aa)) folds into the ATP-grasp 2 domain. Residues Arg-707, Ser-746, Ile-748, Glu-752, Gly-777, Val-778, His-779, Ser-780, Gln-820, and Glu-832 each contribute to the ATP site. Residues Gln-820, Glu-832, and Asn-834 each coordinate Mg(2+). Mn(2+) is bound by residues Gln-820, Glu-832, and Asn-834. The region spanning 930 to 1058 (SHLSEFGQIV…ESRCFNIEAI (129 aa)) is the MGS-like domain. The segment at 930–1058 (SHLSEFGQIV…ESRCFNIEAI (129 aa)) is allosteric domain.

Belongs to the CarB family. As to quaternary structure, composed of two chains; the small (or glutamine) chain promotes the hydrolysis of glutamine to ammonia, which is used by the large (or ammonia) chain to synthesize carbamoyl phosphate. Tetramer of heterodimers (alpha,beta)4. The cofactor is Mg(2+). Mn(2+) is required as a cofactor.

The catalysed reaction is hydrogencarbonate + L-glutamine + 2 ATP + H2O = carbamoyl phosphate + L-glutamate + 2 ADP + phosphate + 2 H(+). It catalyses the reaction hydrogencarbonate + NH4(+) + 2 ATP = carbamoyl phosphate + 2 ADP + phosphate + 2 H(+). The protein operates within amino-acid biosynthesis; L-arginine biosynthesis; carbamoyl phosphate from bicarbonate: step 1/1. It functions in the pathway pyrimidine metabolism; UMP biosynthesis via de novo pathway; (S)-dihydroorotate from bicarbonate: step 1/3. Functionally, large subunit of the glutamine-dependent carbamoyl phosphate synthetase (CPSase). CPSase catalyzes the formation of carbamoyl phosphate from the ammonia moiety of glutamine, carbonate, and phosphate donated by ATP, constituting the first step of 2 biosynthetic pathways, one leading to arginine and/or urea and the other to pyrimidine nucleotides. The large subunit (synthetase) binds the substrates ammonia (free or transferred from glutamine from the small subunit), hydrogencarbonate and ATP and carries out an ATP-coupled ligase reaction, activating hydrogencarbonate by forming carboxy phosphate which reacts with ammonia to form carbamoyl phosphate. This Streptococcus pyogenes serotype M5 (strain Manfredo) protein is Carbamoyl phosphate synthase large chain.